The chain runs to 512 residues: SWI/SNF complex subunit SWI3A (512 aa).

The SWIRM domain maps to 13 to 110 (YTIPAQSSWF…FSSSLKKNDH (98 aa)). The SANT domain occupies 223–274 (SAAAVWTEEEILLLLESVLKHGDDWELISQSVSTKSRLDCISKLIELPFGEF). Residues 291–325 (DENTEQVQTDGQEHEETETREEKEDRVNEDEPPAK) are disordered. The stretch at 424-488 (ALGAAAAQAK…IEGVKETIIQ (65 aa)) forms a coiled coil.

In terms of assembly, homodimers and heterodimers. Interacts with SWI3B, SWI3C, BSH, and the C-terminus of FCA, but not with BRM or SWI3D. Expressed in roots, stems, leaves and flowers, but not in siliques.

Its subcellular location is the nucleus. Component of a multiprotein complex equivalent of the SWI/SNF complex, an ATP-dependent chromatin-remodeling complex, which is required for the positive and negative regulation of gene expression of a large number of genes. It changes chromatin structure by altering DNA-histone contacts within a nucleosome, leading eventually to a change in nucleosome position, thus facilitating or repressing binding of gene-specific transcription factors. The protein is SWI/SNF complex subunit SWI3A (SWI3A) of Arabidopsis thaliana (Mouse-ear cress).